The following is a 394-amino-acid chain: RNA-binding motif protein, X-linked-like-2 (394 aa).

The 79-residue stretch at 8–86 (GKLFIGGLNL…KAIKVAQATK (79 aa)) folds into the RRM domain. The span at 67–78 (RDMNGKSLDGKA) shows a compositional bias: basic and acidic residues. The segment at 67-394 (RDMNGKSLDG…MERGGGRSRY (328 aa)) is disordered. The span at 150–165 (RGPPPPPRRAGPPPKR) shows a compositional bias: pro residues. Basic and acidic residues-rich tracts occupy residues 196 to 231 (PRREPPPPRRDPYLGPRDEGYSSRDGYSSRDYREPR) and 239 to 285 (EYTH…REPF). Positions 321–333 (YSGGRDSYSSSYG) are enriched in low complexity. 2 stretches are compositionally biased toward basic and acidic residues: residues 334-350 (RSDRYSRGRDRVGRPDR) and 383-394 (GRMERGGGRSRY).

The protein localises to the nucleus. The protein is RNA-binding motif protein, X-linked-like-2 (RBMXL2) of Macaca fascicularis (Crab-eating macaque).